Reading from the N-terminus, the 62-residue chain is Cobrotoxin II (62 aa).

Residues 1-16 (LECHNQQSSQTPTTTG) are compositionally biased toward polar residues. The disordered stretch occupies residues 1 to 23 (LECHNQQSSQTPTTTGCSGGENN). Disulfide bonds link C3–C24, C17–C41, C43–C54, and C55–C60.

It belongs to the three-finger toxin family. Short-chain subfamily. Type I alpha-neurotoxin sub-subfamily. Expressed by the venom gland.

The protein localises to the secreted. In terms of biological role, binds to muscle nicotinic acetylcholine receptor (nAChR) and inhibit acetylcholine from binding to the receptor, thereby impairing neuromuscular transmission. The sequence is that of Cobrotoxin II from Naja kaouthia (Monocled cobra).